Consider the following 456-residue polypeptide: Arginine biosynthesis bifunctional protein ArgJ, mitochondrial (456 aa).

Residues Thr184, Lys213, Thr224, Glu311, Asn451, and Thr456 each contribute to the substrate site. Thr224 serves as the catalytic Nucleophile.

It belongs to the ArgJ family. As to quaternary structure, heterodimer of an alpha and a beta chain. In terms of processing, the alpha and beta chains are autoproteolytically processed from a single precursor protein within the mitochondrion.

The protein localises to the mitochondrion matrix. The enzyme catalyses N(2)-acetyl-L-ornithine + L-glutamate = N-acetyl-L-glutamate + L-ornithine. It catalyses the reaction L-glutamate + acetyl-CoA = N-acetyl-L-glutamate + CoA + H(+). It functions in the pathway amino-acid biosynthesis; L-arginine biosynthesis; L-ornithine and N-acetyl-L-glutamate from L-glutamate and N(2)-acetyl-L-ornithine (cyclic): step 1/1. The protein operates within amino-acid biosynthesis; L-arginine biosynthesis; N(2)-acetyl-L-ornithine from L-glutamate: step 1/4. Functionally, catalyzes two activities which are involved in the cyclic version of arginine biosynthesis: the synthesis of acetylglutamate from glutamate and acetyl-CoA, and of ornithine by transacetylation between acetylornithine and glutamate. The protein is Arginine biosynthesis bifunctional protein ArgJ, mitochondrial of Aspergillus niger (strain ATCC MYA-4892 / CBS 513.88 / FGSC A1513).